Consider the following 37-residue polypeptide: Myo-inositol-binding protein (37 aa).

This sequence belongs to the bacterial solute-binding protein 2 family.

The protein localises to the periplasm. The polypeptide is Myo-inositol-binding protein (Pseudomonas sp).